Consider the following 186-residue polypeptide: Elongation factor P (186 aa).

Belongs to the elongation factor P family.

It is found in the cytoplasm. It participates in protein biosynthesis; polypeptide chain elongation. Involved in peptide bond synthesis. Stimulates efficient translation and peptide-bond synthesis on native or reconstituted 70S ribosomes in vitro. Probably functions indirectly by altering the affinity of the ribosome for aminoacyl-tRNA, thus increasing their reactivity as acceptors for peptidyl transferase. The sequence is that of Elongation factor P from Shewanella piezotolerans (strain WP3 / JCM 13877).